A 225-amino-acid chain; its full sequence is Shikimate kinase (225 aa).

ATP is bound at residue 27–32; it reads GAGKTT. Thr-31 lines the Mg(2+) pocket. 3 residues coordinate substrate: Asp-49, Arg-73, and Gly-95. Residue Arg-132 participates in ATP binding. Arg-150 serves as a coordination point for substrate. The tract at residues 186–225 is disordered; the sequence is GGSEPDEAADAAGGSEPDEAADAAGGSEPDEAADAAGGKR.

This sequence belongs to the shikimate kinase family. As to quaternary structure, monomer. The cofactor is Mg(2+).

It is found in the cytoplasm. The enzyme catalyses shikimate + ATP = 3-phosphoshikimate + ADP + H(+). Its pathway is metabolic intermediate biosynthesis; chorismate biosynthesis; chorismate from D-erythrose 4-phosphate and phosphoenolpyruvate: step 5/7. In terms of biological role, catalyzes the specific phosphorylation of the 3-hydroxyl group of shikimic acid using ATP as a cosubstrate. The polypeptide is Shikimate kinase (Frankia casuarinae (strain DSM 45818 / CECT 9043 / HFP020203 / CcI3)).